The chain runs to 237 residues: Methylthioribulose-1-phosphate dehydratase (237 aa).

Residue C98 coordinates substrate. The Zn(2+) site is built by H116 and H118. Catalysis depends on E140, which acts as the Proton donor/acceptor. H196 serves as a coordination point for Zn(2+).

This sequence belongs to the aldolase class II family. MtnB subfamily. Zn(2+) is required as a cofactor.

It is found in the cytoplasm. The catalysed reaction is 5-(methylsulfanyl)-D-ribulose 1-phosphate = 5-methylsulfanyl-2,3-dioxopentyl phosphate + H2O. Its pathway is amino-acid biosynthesis; L-methionine biosynthesis via salvage pathway; L-methionine from S-methyl-5-thio-alpha-D-ribose 1-phosphate: step 2/6. In terms of biological role, catalyzes the dehydration of methylthioribulose-1-phosphate (MTRu-1-P) into 2,3-diketo-5-methylthiopentyl-1-phosphate (DK-MTP-1-P). The sequence is that of Methylthioribulose-1-phosphate dehydratase from Laccaria bicolor (strain S238N-H82 / ATCC MYA-4686) (Bicoloured deceiver).